A 261-amino-acid chain; its full sequence is DNA repair protein RecO (261 aa).

This sequence belongs to the RecO family.

Involved in DNA repair and RecF pathway recombination. This chain is DNA repair protein RecO, found in Limosilactobacillus reuteri (strain DSM 20016) (Lactobacillus reuteri).